The primary structure comprises 234 residues: (5-formylfuran-3-yl)methyl phosphate synthase (234 aa).

Lys27 (schiff-base intermediate with substrate) is an active-site residue. Residue Lys85 is the Proton acceptor of the active site.

The protein belongs to the MfnB family.

It carries out the reaction 2 D-glyceraldehyde 3-phosphate = 4-(hydroxymethyl)-2-furancarboxaldehyde phosphate + phosphate + 2 H2O. Its pathway is cofactor biosynthesis; methanofuran biosynthesis. Functionally, catalyzes the formation of 4-(hydroxymethyl)-2-furancarboxaldehyde phosphate (4-HFC-P) from two molecules of glyceraldehyde-3-P (GA-3-P). The polypeptide is (5-formylfuran-3-yl)methyl phosphate synthase (Methanosarcina mazei (strain ATCC BAA-159 / DSM 3647 / Goe1 / Go1 / JCM 11833 / OCM 88) (Methanosarcina frisia)).